Consider the following 473-residue polypeptide: Pre-mRNA-splicing factor prp5 (473 aa).

WD repeat units follow at residues 161–191, 203–233, 245–275, 287–317, 329–358, 370–399, and 419–449; these read GHLG…KIWD, GHIA…KCWD, GHLS…RVWD, GHKS…RLWD, HHKK…KHWK, GHNA…CFWD, and DSEA…KIYK.

This sequence belongs to the WD repeat PRL1/PRL2 family. Belongs to the 40S cdc5-associated complex (or cwf complex), a spliceosome sub-complex reminiscent of a late-stage spliceosome composed of the U2, U5 and U6 snRNAs and at least brr2, cdc5, cwf2/prp3, cwf3/syf1, cwf4/syf3, cwf5/ecm2, spp42/cwf6, cwf7/spf27, cwf8, cwf9, cwf10, cwf11, cwf12, prp45/cwf13, cwf14, cwf15, cwf16, cwf17, cwf18, cwf19, cwf20, cwf21, cwf22, cwf23, cwf24, cwf25, cwf26, cyp7/cwf27, cwf28, cwf29/ist3, lea1, msl1, prp5/cwf1, prp10, prp12/sap130, prp17, prp22, sap61, sap62, sap114, sap145, slu7, smb1, smd1, smd3, smf1, smg1 and syf2.

Its subcellular location is the nucleus. Functionally, required for both cell cycle progression at G2/M and pre-mRNA splicing. Interacts genetically with the PRP4 kinase. This chain is Pre-mRNA-splicing factor prp5 (prp5), found in Schizosaccharomyces pombe (strain 972 / ATCC 24843) (Fission yeast).